A 92-amino-acid chain; its full sequence is Small ribosomal subunit protein uS19 (92 aa).

A disordered region spans residues 73-92; sequence EFSPTRSFRGHAGAKNKGKK. Over residues 80-92 the composition is skewed to basic residues; the sequence is FRGHAGAKNKGKK.

Belongs to the universal ribosomal protein uS19 family.

Functionally, protein S19 forms a complex with S13 that binds strongly to the 16S ribosomal RNA. In Flavobacterium psychrophilum (strain ATCC 49511 / DSM 21280 / CIP 103535 / JIP02/86), this protein is Small ribosomal subunit protein uS19.